We begin with the raw amino-acid sequence, 100 residues long: Large ribosomal subunit protein uL23 (100 aa).

The protein belongs to the universal ribosomal protein uL23 family. As to quaternary structure, part of the 50S ribosomal subunit. Contacts protein L29, and trigger factor when it is bound to the ribosome.

Functionally, one of the early assembly proteins it binds 23S rRNA. One of the proteins that surrounds the polypeptide exit tunnel on the outside of the ribosome. Forms the main docking site for trigger factor binding to the ribosome. This Mycobacteroides abscessus (strain ATCC 19977 / DSM 44196 / CCUG 20993 / CIP 104536 / JCM 13569 / NCTC 13031 / TMC 1543 / L948) (Mycobacterium abscessus) protein is Large ribosomal subunit protein uL23.